The following is a 432-amino-acid chain: Alpha-enolase (432 aa).

Serine 40 lines the Mg(2+) pocket. Residues histidine 158 and glutamate 167 each contribute to the substrate site. Residue glutamate 210 is the Proton donor of the active site. Aspartate 245, glutamate 293, and aspartate 318 together coordinate Mg(2+). Substrate-binding residues include glutamate 293 and aspartate 318. The active-site Proton acceptor is the lysine 343. Residues 370–373 (SHRS) and lysine 394 each bind substrate.

It belongs to the enolase family. Dimer. Requires Mg(2+) as cofactor.

The protein resides in the cytoplasm. It carries out the reaction (2R)-2-phosphoglycerate = phosphoenolpyruvate + H2O. It functions in the pathway carbohydrate degradation; glycolysis; pyruvate from D-glyceraldehyde 3-phosphate: step 4/5. Multifunctional enzyme that, as well as its role in glycolysis, plays a part in various processes such as growth control, hypoxia tolerance and allergic responses. This Thunnus albacares (Yellowfin tuna) protein is Alpha-enolase.